The primary structure comprises 496 residues: FAD-linked oxidoreductase AFUA_1G00980 (496 aa).

A signal peptide spans methionine 1 to alanine 21. 8 N-linked (GlcNAc...) asparagine glycosylation sites follow: asparagine 49, asparagine 122, asparagine 205, asparagine 258, asparagine 344, asparagine 351, asparagine 371, and asparagine 382. The FAD-binding PCMH-type domain occupies methionine 64–leucine 243.

This sequence belongs to the oxygen-dependent FAD-linked oxidoreductase family. It depends on FAD as a cofactor.

FAD-linked oxidoreductase; part of the gene cluster that mediates the biosynthesis of fumigermin that inhibits germination of spores of the inducing S.rapamycinicus, and thus helps the fungus to defend resources in the shared habitat against a bacterial competitor. The partially reducing polyketide synthase fngA alone is sufficient for the production of fumigermin. FgnA catalyzes the condensation of 3 malonyl-CoA units to an acetyl-CoA starter, and 3 methylations to yield fumigermin. It is remarkable that the five cluster genes including fgnA are conserved in distantly related fungi, supporting the assumption of a fumigermin cluster; it is thus possible that originally all five genes were functional, but that the genes encoding tailoring enzymes became inactive from mutations, similar to the case of the fgnA gene in strains A1163 and Af293. This Aspergillus fumigatus (strain ATCC MYA-4609 / CBS 101355 / FGSC A1100 / Af293) (Neosartorya fumigata) protein is FAD-linked oxidoreductase AFUA_1G00980.